Here is a 368-residue protein sequence, read N- to C-terminus: Aminomethyltransferase (368 aa).

It belongs to the GcvT family. In terms of assembly, the glycine cleavage system is composed of four proteins: P, T, L and H.

It carries out the reaction N(6)-[(R)-S(8)-aminomethyldihydrolipoyl]-L-lysyl-[protein] + (6S)-5,6,7,8-tetrahydrofolate = N(6)-[(R)-dihydrolipoyl]-L-lysyl-[protein] + (6R)-5,10-methylene-5,6,7,8-tetrahydrofolate + NH4(+). Functionally, the glycine cleavage system catalyzes the degradation of glycine. This Xylella fastidiosa (strain M12) protein is Aminomethyltransferase.